The chain runs to 74 residues: Translation initiation factor IF-1 (74 aa).

The 72-residue stretch at 1-72 (MGKEDVIRME…TRGRIVYRKK (72 aa)) folds into the S1-like domain.

Belongs to the IF-1 family. In terms of assembly, component of the 30S ribosomal translation pre-initiation complex which assembles on the 30S ribosome in the order IF-2 and IF-3, IF-1 and N-formylmethionyl-tRNA(fMet); mRNA recruitment can occur at any time during PIC assembly.

Its subcellular location is the cytoplasm. In terms of biological role, one of the essential components for the initiation of protein synthesis. Stabilizes the binding of IF-2 and IF-3 on the 30S subunit to which N-formylmethionyl-tRNA(fMet) subsequently binds. Helps modulate mRNA selection, yielding the 30S pre-initiation complex (PIC). Upon addition of the 50S ribosomal subunit IF-1, IF-2 and IF-3 are released leaving the mature 70S translation initiation complex. This chain is Translation initiation factor IF-1, found in Thermotoga petrophila (strain ATCC BAA-488 / DSM 13995 / JCM 10881 / RKU-1).